The primary structure comprises 151 residues: HTH-type transcriptional regulator FL11 (151 aa).

An HTH asnC-type domain is found at 5–66 (LDEIDKKIIK…IIDPEALGYS (62 aa)). The H-T-H motif DNA-binding region spans 24-43 (LREISKITGLAESTIHERIR). 98–104 (ETTGDYD) is an L-arginine binding site. L-lysine-binding positions include N118, D122, and 133 to 135 (THT). L-arginine contacts are provided by residues D122 and 133 to 135 (THT).

Homodimer. Binds DNA as a dimer and an octamer. The octamer formed with lysine is stable in solution, but the octamer formed with arginine is unstable without DNA. When crystallized in the absence of DNA, dimers are assembled into helical cylinders with six dimers per turn. In solution, predominantly behaves as a dimer.

In the famine mode, FL11 forms dimers and acts as a repressor, leading to growth arrest. In the feast mode, in the presence of high concentrations of lysine or arginine, four dimers assemble into an octamer and cover the fl11 and lysine biosynthesis promoters. This leads to the inhibition of fl11 expression and lysine biosynthesis, decrease of the FL11 concentration in the cell, derepression of the target genes and activation of the metabolism. In terms of biological role, DNA-binding protein involved in the repression of transcription of a large number of genes, thereby arresting growth, in response to environmental changes. Binding sites are identified in promoters of approximately 200 transcription units, including genes involved in ATP synthesis, transmembrane transport, translation and DNA synthesis. This Pyrococcus horikoshii (strain ATCC 700860 / DSM 12428 / JCM 9974 / NBRC 100139 / OT-3) protein is HTH-type transcriptional regulator FL11.